The chain runs to 203 residues: Endo-type membrane-bound lytic murein transglycosylase A (203 aa).

Positions 1–15 are cleaved as a signal peptide; sequence MKLRWFAFLIVLLAG. The N-palmitoyl cysteine moiety is linked to residue cysteine 16. Cysteine 16 carries the S-diacylglycerol cysteine lipid modification.

It belongs to the transglycosylase Slt family.

It is found in the cell outer membrane. The enzyme catalyses Endolytic cleavage of the (1-&gt;4)-beta-glycosidic linkage between N-acetylmuramic acid (MurNAc) and N-acetylglucosamine (GlcNAc) residues in peptidoglycan with concomitant formation of a 1,6-anhydrobond in the MurNAc residue.. In terms of biological role, murein-degrading enzyme. May play a role in recycling of muropeptides during cell elongation and/or cell division. Preferentially cleaves at a distance of more than two disaccharide units from the ends of the glycan chain. This Shigella dysenteriae serotype 1 (strain Sd197) protein is Endo-type membrane-bound lytic murein transglycosylase A.